Reading from the N-terminus, the 421-residue chain is Ubiquitin-like modifier-activating enzyme 5 (421 aa).

Residues glycine 89, aspartate 110, lysine 133, asparagine 156, and asparagine 191 each contribute to the ATP site. Zn(2+) contacts are provided by cysteine 233 and cysteine 236. The active-site Glycyl thioester intermediate is the cysteine 257. Residues cysteine 310 and cysteine 315 each coordinate Zn(2+).

It belongs to the ubiquitin-activating E1 family. UBA5 subfamily.

In terms of biological role, E1-like enzyme which activates UFM1. In Oryza sativa subsp. japonica (Rice), this protein is Ubiquitin-like modifier-activating enzyme 5.